Consider the following 237-residue polypeptide: Uridylate kinase (237 aa).

12-15 (KLSG) contributes to the ATP binding site. Residues 20–25 (GDEGFG) are involved in allosteric activation by GTP. Gly54 lines the UMP pocket. Positions 55 and 59 each coordinate ATP. UMP is bound by residues Asp74 and 135–142 (TGSPFFTT). ATP contacts are provided by Thr162, Tyr168, and Asp171.

Belongs to the UMP kinase family. As to quaternary structure, homohexamer.

It localises to the cytoplasm. It catalyses the reaction UMP + ATP = UDP + ADP. The protein operates within pyrimidine metabolism; CTP biosynthesis via de novo pathway; UDP from UMP (UMPK route): step 1/1. Allosterically activated by GTP. Inhibited by UTP. Functionally, catalyzes the reversible phosphorylation of UMP to UDP. This chain is Uridylate kinase, found in Actinobacillus pleuropneumoniae serotype 5b (strain L20).